A 464-amino-acid polypeptide reads, in one-letter code: Argininosuccinate lyase (464 aa).

It belongs to the lyase 1 family. Argininosuccinate lyase subfamily.

It localises to the cytoplasm. The catalysed reaction is 2-(N(omega)-L-arginino)succinate = fumarate + L-arginine. It participates in amino-acid biosynthesis; L-arginine biosynthesis; L-arginine from L-ornithine and carbamoyl phosphate: step 3/3. The sequence is that of Argininosuccinate lyase from Chlorobium phaeobacteroides (strain DSM 266 / SMG 266 / 2430).